A 208-amino-acid polypeptide reads, in one-letter code: Ras-related protein M-Ras (208 aa).

GTP-binding residues include D21, G22, G23, V24, G25, K26, S27, A28, F38, V39, P40, Y42, P44, and T45. S27 provides a ligand contact to Mg(2+). Positions 42-50 match the Effector region motif; sequence YDPTIEDSY. Mg(2+) contacts are provided by T45 and D67. GTP-binding residues include G70, N126, K127, D129, S156, A157, and K158. C205 carries the cysteine methyl ester modification. A lipid anchor (S-geranylgeranyl cysteine) is attached at C205. The propeptide at 206–208 is removed in mature form; the sequence is VIL.

The protein belongs to the small GTPase superfamily. Ras family. Component of the SHOC2-MRAS-PP1c (SMP) holophosphatase complex consisting of SHOC2, GTP-bound M-Ras/MRAS and the catalytic subunit of protein phosphatase 1 (either PPP1CA, PPP1CB or PPP1CC). Interacts (active GTP-bound form) with both SHOC2 and PP1c (all isoforms) to form a tertiary complex; SHOC2 and PP1c preferably bind M-Ras/MRAS, but they also bind K-Ras/KRAS, N-Ras/NRAS and H-Ras/HRAS. Interacts with RGL3. Interacts (active GTP-bound form preferentially) with RGS14. The cofactor is Mg(2+). Expressed in skeletal muscle cells.

It is found in the cell membrane. The catalysed reaction is GTP + H2O = GDP + phosphate + H(+). Signal transducer in the Ras-MAPK signaling pathway that regulates cell proliferation and survival. Core component of the SHOC2-MRAS-PP1c (SMP) holophosphatase complex that regulates the MAPK pathway activation. The formation of the SMP complex only occurs when MRAS is GTP-bound. MRAS has low intrinsic GTPase activity and may require additional factors for activation. The SMP complex specifically dephosphorylates the inhibitory phosphorylation at 'Ser-259' of RAF1 kinase, 'Ser-365' of BRAF kinase and 'Ser-214' of ARAF kinase, stimulating their kinase activities. In Rattus norvegicus (Rat), this protein is Ras-related protein M-Ras (Mras).